The chain runs to 199 residues: MIQISDKAQTYFRKLIEREGVPGMGVRLSAVDAGTPRADARLEFAEPADLSGDEWAIDCDGFTLYVVAASVPWMDGAEIDYVTQSTGNQQLTIKAPKIKGEAPAESASMVERVRWVVENEINPQLASHGGRVAVQEVSADGVVLLRFGGGCHGCGMADVTLKQGIEKTLMGRVPGVIAVRDATDHATGDAPYIPRDSAA.

C151 and C154 together coordinate [4Fe-4S] cluster.

Belongs to the NfuA family. In terms of assembly, homodimer. [4Fe-4S] cluster is required as a cofactor.

In terms of biological role, involved in iron-sulfur cluster biogenesis. Binds a 4Fe-4S cluster, can transfer this cluster to apoproteins, and thereby intervenes in the maturation of Fe/S proteins. Could also act as a scaffold/chaperone for damaged Fe/S proteins. In Xanthomonas oryzae pv. oryzae (strain MAFF 311018), this protein is Fe/S biogenesis protein NfuA.